The following is a 329-amino-acid chain: Ketol-acid reductoisomerase (NADP(+)) (329 aa).

The KARI N-terminal Rossmann domain occupies 1 to 181 (MKIYYDQDAD…GGTRGGVLTT (181 aa)). NADP(+)-binding positions include 24 to 27 (YGSQ), R47, and 82 to 85 (DQHQ). H107 is a catalytic residue. Residue G133 participates in NADP(+) binding. Residues 182-327 (TFKEETETDL…AKLRGMMSWL (146 aa)) enclose the KARI C-terminal knotted domain. Mg(2+)-binding residues include D190, E194, E226, and E230. Residue S251 coordinates substrate.

Belongs to the ketol-acid reductoisomerase family. It depends on Mg(2+) as a cofactor.

The catalysed reaction is (2R)-2,3-dihydroxy-3-methylbutanoate + NADP(+) = (2S)-2-acetolactate + NADPH + H(+). It catalyses the reaction (2R,3R)-2,3-dihydroxy-3-methylpentanoate + NADP(+) = (S)-2-ethyl-2-hydroxy-3-oxobutanoate + NADPH + H(+). Its pathway is amino-acid biosynthesis; L-isoleucine biosynthesis; L-isoleucine from 2-oxobutanoate: step 2/4. It functions in the pathway amino-acid biosynthesis; L-valine biosynthesis; L-valine from pyruvate: step 2/4. Functionally, involved in the biosynthesis of branched-chain amino acids (BCAA). Catalyzes an alkyl-migration followed by a ketol-acid reduction of (S)-2-acetolactate (S2AL) to yield (R)-2,3-dihydroxy-isovalerate. In the isomerase reaction, S2AL is rearranged via a Mg-dependent methyl migration to produce 3-hydroxy-3-methyl-2-ketobutyrate (HMKB). In the reductase reaction, this 2-ketoacid undergoes a metal-dependent reduction by NADPH to yield (R)-2,3-dihydroxy-isovalerate. This is Ketol-acid reductoisomerase (NADP(+)) from Solidesulfovibrio magneticus (strain ATCC 700980 / DSM 13731 / RS-1) (Desulfovibrio magneticus).